A 603-amino-acid polypeptide reads, in one-letter code: Polypeptide N-acetylgalactosaminyltransferase 10 (603 aa).

Over methionine 1–alanine 11 the chain is Cytoplasmic. A helical; Signal-anchor for type II membrane protein transmembrane segment spans residues valine 12–tyrosine 31. The Lumenal segment spans residues arginine 32–asparagine 603. 2 N-linked (GlcNAc...) asparagine glycosylation sites follow: asparagine 124 and asparagine 146. Intrachain disulfides connect cysteine 135-cysteine 365, cysteine 356-cysteine 432, cysteine 471-cysteine 488, cysteine 523-cysteine 538, and cysteine 563-cysteine 578. The tract at residues leucine 144–arginine 253 is catalytic subdomain A. Positions 185 and 214 each coordinate substrate. Position 237 (aspartate 237) interacts with Mn(2+). Residue serine 238 coordinates substrate. Histidine 239 contributes to the Mn(2+) binding site. The interval proline 311–arginine 373 is catalytic subdomain B. Tryptophan 342 is a binding site for substrate. Residue histidine 370 coordinates Mn(2+). Residues arginine 373 and tyrosine 378 each contribute to the substrate site. The segment at arginine 373 to valine 384 is flexible loop. Residues alanine 458–glutamate 590 form the Ricin B-type lectin domain. Asparagine 593 carries an N-linked (GlcNAc...) asparagine glycan.

This sequence belongs to the glycosyltransferase 2 family. GalNAc-T subfamily. Requires Mn(2+) as cofactor. In terms of tissue distribution, expressed at higher level than GALNT9. In the developing hindbrain region of 14.5 dpc embryos it accumulates in the rapidly dividing, undifferentiated ventricular zone adjacent to the pons. It also accumulates in the regions immediately rostral and caudal to the dorsal rhombic lips differentiating into the cerebellum. Not expressed in the developing choroid plexus.

It is found in the golgi apparatus membrane. It carries out the reaction L-seryl-[protein] + UDP-N-acetyl-alpha-D-galactosamine = a 3-O-[N-acetyl-alpha-D-galactosaminyl]-L-seryl-[protein] + UDP + H(+). The catalysed reaction is L-threonyl-[protein] + UDP-N-acetyl-alpha-D-galactosamine = a 3-O-[N-acetyl-alpha-D-galactosaminyl]-L-threonyl-[protein] + UDP + H(+). It functions in the pathway protein modification; protein glycosylation. Functionally, catalyzes the initial reaction in O-linked oligosaccharide biosynthesis, the transfer of an N-acetyl-D-galactosamine residue to a serine or threonine residue on the protein receptor. Has activity toward Muc5Ac and EA2 peptide substrates. The protein is Polypeptide N-acetylgalactosaminyltransferase 10 (Galnt10) of Mus musculus (Mouse).